A 150-amino-acid polypeptide reads, in one-letter code: MSMSTTTEVIAHYWAFAVFLIGALGLCSLMLLGARYLGGRAQARAKHVPYESGLDSVGSARLRMSAKFYLVAMFFVIFDVEALFLYAWAVSVREVGWLGFIEAAVFIAILLAGLFYLVRIGALNWTPVRSRRETAGKSHVRLTSGKHPQQ.

The next 3 membrane-spanning stretches (helical) occupy residues 14-34, 70-90, and 98-118; these read WAFAVFLIGALGLCSLMLLGA, LVAMFFVIFDVEALFLYAWAV, and LGFIEAAVFIAILLAGLFYLV.

It belongs to the complex I subunit 3 family. NDH-1 is composed of 13 different subunits. Subunits NuoA, H, J, K, L, M, N constitute the membrane sector of the complex.

It localises to the cell inner membrane. The enzyme catalyses a quinone + NADH + 5 H(+)(in) = a quinol + NAD(+) + 4 H(+)(out). NDH-1 shuttles electrons from NADH, via FMN and iron-sulfur (Fe-S) centers, to quinones in the respiratory chain. The immediate electron acceptor for the enzyme in this species is believed to be ubiquinone. Couples the redox reaction to proton translocation (for every two electrons transferred, four hydrogen ions are translocated across the cytoplasmic membrane), and thus conserves the redox energy in a proton gradient. This is NADH-quinone oxidoreductase subunit A from Proteus mirabilis (strain HI4320).